Reading from the N-terminus, the 473-residue chain is Zinc finger and SCAN domain-containing protein 21 (473 aa).

K27 is covalently cross-linked (Glycyl lysine isopeptide (Lys-Gly) (interchain with G-Cter in SUMO2)). The SCAN box domain maps to R45–L127. Residues L127–E167 are disordered. The span at I148–P165 shows a compositional bias: polar residues. Residues K221 and K232 each participate in a glycyl lysine isopeptide (Lys-Gly) (interchain with G-Cter in SUMO2) cross-link. Residues L244–P272 form a disordered region. Basic and acidic residues predominate over residues G258 to P272. 7 C2H2-type zinc fingers span residues Y277–H299, Y305–H327, Y333–H354, Y360–H382, Y388–H410, Y416–H438, and Y444–H466. Residue K349 forms a Glycyl lysine isopeptide (Lys-Gly) (interchain with G-Cter in SUMO2) linkage.

The protein belongs to the krueppel C2H2-type zinc-finger protein family.

The protein localises to the nucleus. Strong transcriptional activator. Plays an important role in spermatogenesis; essential for the progression of meiotic prophase I in spermatocytes. The protein is Zinc finger and SCAN domain-containing protein 21 (ZSCAN21) of Pan troglodytes (Chimpanzee).